A 211-amino-acid polypeptide reads, in one-letter code: PITH domain-containing protein GA19395 (211 aa).

Residues 20–192 enclose the PITH domain; it reads DHALEMGIEY…GVTICNYEAR (173 aa).

The protein belongs to the PITHD1 family.

This Drosophila pseudoobscura pseudoobscura (Fruit fly) protein is PITH domain-containing protein GA19395.